Reading from the N-terminus, the 134-residue chain is UPF0412 protein YaaI (134 aa).

The first 23 residues, 1–23, serve as a signal peptide directing secretion; the sequence is MKSVFTISASLAISLMLCCTAQA.

The protein belongs to the UPF0412 family.

This is UPF0412 protein YaaI from Escherichia coli O157:H7.